The sequence spans 197 residues: Guanylate kinase (197 aa).

The region spanning 6–191 (SKLIILSGPS…CVAQIEKIIS (186 aa)) is the Guanylate kinase-like domain. Residue 13–20 (GPSGVGKG) participates in ATP binding.

This sequence belongs to the guanylate kinase family.

It localises to the cytoplasm. The catalysed reaction is GMP + ATP = GDP + ADP. Functionally, essential for recycling GMP and indirectly, cGMP. This chain is Guanylate kinase, found in Mesomycoplasma hyopneumoniae (strain 7448) (Mycoplasma hyopneumoniae).